A 384-amino-acid chain; its full sequence is S-adenosylmethionine synthase (384 aa).

Histidine 15 contacts ATP. Position 17 (aspartate 17) interacts with Mg(2+). Residue glutamate 43 coordinates K(+). L-methionine-binding residues include glutamate 56 and glutamine 99. A flexible loop region spans residues 99-109 (QSPDINQGVDR). Residues 164-166 (DAK), 231-232 (RF), aspartate 240, 246-247 (RK), alanine 263, and lysine 267 each bind ATP. Residue aspartate 240 participates in L-methionine binding. Lysine 271 is a binding site for L-methionine.

This sequence belongs to the AdoMet synthase family. Homotetramer; dimer of dimers. The cofactor is Mg(2+). Requires K(+) as cofactor.

The protein resides in the cytoplasm. It catalyses the reaction L-methionine + ATP + H2O = S-adenosyl-L-methionine + phosphate + diphosphate. The protein operates within amino-acid biosynthesis; S-adenosyl-L-methionine biosynthesis; S-adenosyl-L-methionine from L-methionine: step 1/1. Its function is as follows. Catalyzes the formation of S-adenosylmethionine (AdoMet) from methionine and ATP. The overall synthetic reaction is composed of two sequential steps, AdoMet formation and the subsequent tripolyphosphate hydrolysis which occurs prior to release of AdoMet from the enzyme. The polypeptide is S-adenosylmethionine synthase (Shewanella woodyi (strain ATCC 51908 / MS32)).